A 601-amino-acid chain; its full sequence is Group B oligopeptidase PepB (601 aa).

His386 contributes to the Zn(2+) binding site. The active site involves Glu387. His390 and His393 together coordinate Zn(2+).

It belongs to the peptidase M3B family. It depends on Zn(2+) as a cofactor.

Its subcellular location is the cytoplasm. Its function is as follows. Has oligopeptidase activity and degrades a variety of small bioactive peptides, including bradykinin, neurotensin, and peptide fragments of substance P and adrenocorticotropin. Also hydrolyzes the synthetic collagen-like substrate N-(3-[2-furyl]acryloyl)-Leu-Gly-Pro-Ala (FALGPA). This Streptococcus agalactiae serotype III (strain NEM316) protein is Group B oligopeptidase PepB (pepB).